Reading from the N-terminus, the 111-residue chain is Phosphoribosyl-AMP cyclohydrolase (111 aa).

A Mg(2+)-binding site is contributed by Asp80. Cys81 lines the Zn(2+) pocket. Positions 82 and 84 each coordinate Mg(2+). Residues Cys97 and Cys104 each contribute to the Zn(2+) site.

The protein belongs to the PRA-CH family. In terms of assembly, homodimer. Requires Mg(2+) as cofactor. It depends on Zn(2+) as a cofactor.

The protein resides in the cytoplasm. The enzyme catalyses 1-(5-phospho-beta-D-ribosyl)-5'-AMP + H2O = 1-(5-phospho-beta-D-ribosyl)-5-[(5-phospho-beta-D-ribosylamino)methylideneamino]imidazole-4-carboxamide. The protein operates within amino-acid biosynthesis; L-histidine biosynthesis; L-histidine from 5-phospho-alpha-D-ribose 1-diphosphate: step 3/9. Its function is as follows. Catalyzes the hydrolysis of the adenine ring of phosphoribosyl-AMP. This chain is Phosphoribosyl-AMP cyclohydrolase, found in Mycobacterium marinum (strain ATCC BAA-535 / M).